A 330-amino-acid polypeptide reads, in one-letter code: Aspartate--ammonia ligase (330 aa).

It belongs to the class-II aminoacyl-tRNA synthetase family. AsnA subfamily.

The protein resides in the cytoplasm. The catalysed reaction is L-aspartate + NH4(+) + ATP = L-asparagine + AMP + diphosphate + H(+). The protein operates within amino-acid biosynthesis; L-asparagine biosynthesis; L-asparagine from L-aspartate (ammonia route): step 1/1. The protein is Aspartate--ammonia ligase of Cronobacter sakazakii (strain ATCC BAA-894) (Enterobacter sakazakii).